The chain runs to 778 residues: Aerobic respiration control sensor protein ArcB (778 aa).

At 1-25 (MKQIRLLAQYYVDLMMKLGLVRFSM) the chain is on the cytoplasmic side. The chain crosses the membrane as a helical span at residues 26-46 (LLALALVVLAIVVQMAVTMVL). Topologically, residues 47 to 57 (HGQVESIDVIR) are periplasmic. The helical transmembrane segment at 58-78 (SIFFGLLITPWAVYFLSVVVE) threads the bilayer. Over 79–778 (QLEESRQRLS…KAWVAKATKK (700 aa)) the chain is Cytoplasmic. The PAS domain maps to 153 to 223 (QSSFLRSFLD…ETDEKVFRHN (71 aa)). The PAC domain occupies 226 to 278 (LTYEQWLDYPDGRKACFEIRKVPYYDRVGKRHGLMGFGRDITERKRYQDALER). The Histidine kinase domain occupies 289–507 (TISHELRTPL…TFTLTIHAPS (219 aa)). His-292 is modified (phosphohistidine; by autocatalysis). The 117-residue stretch at 527-643 (NVLLVEDIEL…ALTAMIKKFW (117 aa)) folds into the Response regulatory domain. Asp-576 carries the 4-aspartylphosphate modification. The HPt domain occupies 678 to 771 (GPKLITDGLA…RHDVEVLKAW (94 aa)). His-717 is modified (phosphohistidine).

Activation requires a sequential transfer of a phosphate group from a His in the primary transmitter domain, to an Asp in the receiver domain and to a His in the secondary transmitter domain.

It localises to the cell inner membrane. The enzyme catalyses ATP + protein L-histidine = ADP + protein N-phospho-L-histidine.. Its function is as follows. Member of the two-component regulatory system ArcB/ArcA. Sensor-regulator protein for anaerobic repression of the arc modulon. Activates ArcA via a four-step phosphorelay. ArcB can also dephosphorylate ArcA by a reverse phosphorelay involving His-717 and Asp-576. This Escherichia coli O157:H7 protein is Aerobic respiration control sensor protein ArcB (arcB).